The following is a 503-amino-acid chain: 2-(3-amino-3-carboxypropyl)histidine synthase subunit 2 (503 aa).

3 residues coordinate [4Fe-4S] cluster: Cys-93, Cys-114, and Cys-334. Residues 464–503 (GLDSVDEGEGPSKLYEGQSGIAKGYVGEGSKEKIQRDFGK) form a disordered region. Basic and acidic residues predominate over residues 492–503 (GSKEKIQRDFGK).

This sequence belongs to the DPH1/DPH2 family. DPH2 subfamily. In terms of assembly, component of the 2-(3-amino-3-carboxypropyl)histidine synthase complex composed of dph1, dph2, dph3 and a NADH-dependent reductase, predominantly cbr1. The cofactor is [4Fe-4S] cluster.

It is found in the cytoplasm. The protein operates within protein modification; peptidyl-diphthamide biosynthesis. Required for the first step of diphthamide biosynthesis, a post-translational modification of histidine which occurs in elongation factor 2. Dph1 and dph2 transfer a 3-amino-3-carboxypropyl (ACP) group from S-adenosyl-L-methionine (SAM) to a histidine residue, the reaction is assisted by a reduction system comprising dph3 and a NADH-dependent reductase, predominantly cbr1. Facilitates the reduction of the catalytic iron-sulfur cluster found in the dph1 subunit. The sequence is that of 2-(3-amino-3-carboxypropyl)histidine synthase subunit 2 from Schizosaccharomyces pombe (strain 972 / ATCC 24843) (Fission yeast).